The primary structure comprises 305 residues: Sulfate adenylyltransferase subunit 2 (305 aa).

Belongs to the PAPS reductase family. CysD subfamily. In terms of assembly, heterodimer composed of CysD, the smaller subunit, and CysN.

The catalysed reaction is sulfate + ATP + H(+) = adenosine 5'-phosphosulfate + diphosphate. The protein operates within sulfur metabolism; hydrogen sulfide biosynthesis; sulfite from sulfate: step 1/3. Functionally, with CysN forms the ATP sulfurylase (ATPS) that catalyzes the adenylation of sulfate producing adenosine 5'-phosphosulfate (APS) and diphosphate, the first enzymatic step in sulfur assimilation pathway. APS synthesis involves the formation of a high-energy phosphoric-sulfuric acid anhydride bond driven by GTP hydrolysis by CysN coupled to ATP hydrolysis by CysD. The protein is Sulfate adenylyltransferase subunit 2 of Stutzerimonas stutzeri (strain A1501) (Pseudomonas stutzeri).